The sequence spans 353 residues: Phospho-N-acetylmuramoyl-pentapeptide-transferase (353 aa).

10 helical membrane passes run Phe-22–Ala-42, Thr-65–Ile-85, Asp-88–Ile-108, Leu-129–Leu-149, Pro-161–Ser-181, Gly-192–Ser-212, Gly-228–Trp-248, Val-256–Ile-276, Ile-281–Val-301, and Lys-330–Ile-350.

It belongs to the glycosyltransferase 4 family. MraY subfamily. It depends on Mg(2+) as a cofactor.

The protein localises to the cell inner membrane. It carries out the reaction UDP-N-acetyl-alpha-D-muramoyl-L-alanyl-gamma-D-glutamyl-meso-2,6-diaminopimeloyl-D-alanyl-D-alanine + di-trans,octa-cis-undecaprenyl phosphate = di-trans,octa-cis-undecaprenyl diphospho-N-acetyl-alpha-D-muramoyl-L-alanyl-D-glutamyl-meso-2,6-diaminopimeloyl-D-alanyl-D-alanine + UMP. The protein operates within cell wall biogenesis; peptidoglycan biosynthesis. Its function is as follows. Catalyzes the initial step of the lipid cycle reactions in the biosynthesis of the cell wall peptidoglycan: transfers peptidoglycan precursor phospho-MurNAc-pentapeptide from UDP-MurNAc-pentapeptide onto the lipid carrier undecaprenyl phosphate, yielding undecaprenyl-pyrophosphoryl-MurNAc-pentapeptide, known as lipid I. The polypeptide is Phospho-N-acetylmuramoyl-pentapeptide-transferase (Campylobacter jejuni subsp. jejuni serotype O:2 (strain ATCC 700819 / NCTC 11168)).